The chain runs to 478 residues: Sorting nexin-4 (478 aa).

Residues 1 to 10 (MAVIDQHQDD) are compositionally biased toward basic and acidic residues. The disordered stretch occupies residues 1–56 (MAVIDQHQDDFSNVSWNTDEHTAAESSSSVTATEFDDTERNGHNAYESDAPGSDGQ). Positions 24–33 (AESSSSVTAT) are enriched in low complexity. Residues 58 to 180 (VLDCVVSEPL…IFLESPDWNA (123 aa)) enclose the PX domain. Residues Arg-101, Thr-103, Lys-127, and Arg-146 each coordinate a 1,2-diacyl-sn-glycero-3-phospho-(1D-myo-inositol-3-phosphate). Residues 459 to 478 (EGVSGTRSTGVEPPGRRLAD) are disordered.

It belongs to the sorting nexin family. Interacts with the mitochondrial prohibitin complex subunits PHB1 and PHB2; the interaction is direct and plays a role in mitophagy.

It localises to the cytoplasm. The protein localises to the cytosol. It is found in the preautophagosomal structure membrane. The protein resides in the endosome membrane. Its subcellular location is the mitochondrion membrane. It localises to the lipid droplet. In terms of biological role, sorting nexin, involved in the separation or division of vacuoles throughout the entire life cycle of the cells. Involved in retrieval of late-Golgi SNAREs from post-Golgi endosomes to the trans-Golgi network, for cytoplasm to vacuole transport (Cvt), and autophagy of large cargos including mitophagy, pexophagy and glycophagy. Required for the switch to necrotrophic growth. In Colletotrichum higginsianum (strain IMI 349063) (Crucifer anthracnose fungus), this protein is Sorting nexin-4.